The primary structure comprises 1121 residues: PR domain zinc finger protein 10 (1121 aa).

Disordered regions lie at residues 1–24 (MEAK…NTPQ) and 92–125 (TEAS…MDDW). Residues 106-124 (VDSEDEEEDNDSEDSEMDD) show a composition bias toward acidic residues. The region spanning 173 to 290 (LPLVLYIDRF…PKQELKVWYA (118 aa)) is the SET domain. The tract at residues 192 to 295 (IPKRTQFGPL…KVWYAASYAE (104 aa)) is N-terminal PR domain; essential for transcriptional activation. The segment at 319-341 (WPCYECNRRFMSSEQLQQHLNMH) adopts a C2H2-type 1 zinc-finger fold. Disordered regions lie at residues 350-387 (RPKS…SADK) and 419-473 (ESME…PHLT). A compositionally biased stretch (basic residues) spans 351–374 (PKSRGRGRGRKRFGGARRPGRRTK). C2H2-type zinc fingers lie at residues 500–522 (FKCP…MRFH), 529–551 (HVCH…LVLH), 557–579 (YSCL…VGIH), 585–608 (FLCP…RSFH), 613–635 (FQCS…MLRH), 641–664 (FLCS…QRMH), 696–719 (FKCR…SKRH), 741–764 (YYCQ…LKNH), and 803–826 (VCCP…RKKH). The tract at residues 871 to 1101 (QAMTELSQTL…PAGGQQATTQ (231 aa)) is C-terminal glutamine-rich region; essential for transcriptional activation. The interval 1077–1097 (VPSTATQGHPDPLEQPAGGQQ) is disordered.

This sequence belongs to the class V-like SAM-binding methyltransferase superfamily.

Its subcellular location is the nucleus. Transcriptional activator, essential for early embryonic development and survival of embryonic stem cells (ESCs). Supports cell growth and survival during early development by transcriptionally activating the expression of the translation initiation factor EIF3B, to sustain global translation. Activates the transcription of FLNC. This chain is PR domain zinc finger protein 10 (prdm10), found in Danio rerio (Zebrafish).